A 553-amino-acid polypeptide reads, in one-letter code: CTP synthase (553 aa).

Residues Met-1–Leu-270 are amidoligase domain. Ser-13 serves as a coordination point for CTP. A UTP-binding site is contributed by Ser-13. ATP contacts are provided by residues Ser-14–Ile-19 and Asp-71. Asp-71 and Glu-144 together coordinate Mg(2+). CTP contacts are provided by residues Asp-151–Glu-153, Lys-191–Gln-196, and Lys-227. UTP is bound by residues Lys-191–Gln-196 and Lys-227. The Glutamine amidotransferase type-1 domain maps to Thr-295–Thr-547. Position 356 (Gly-356) interacts with L-glutamine. Catalysis depends on Cys-383, which acts as the Nucleophile; for glutamine hydrolysis. L-glutamine-binding positions include Leu-384–Gln-387, Glu-407, and Arg-473. Residues His-520 and Glu-522 contribute to the active site.

This sequence belongs to the CTP synthase family. In terms of assembly, homotetramer.

The enzyme catalyses UTP + L-glutamine + ATP + H2O = CTP + L-glutamate + ADP + phosphate + 2 H(+). It catalyses the reaction L-glutamine + H2O = L-glutamate + NH4(+). It carries out the reaction UTP + NH4(+) + ATP = CTP + ADP + phosphate + 2 H(+). The protein operates within pyrimidine metabolism; CTP biosynthesis via de novo pathway; CTP from UDP: step 2/2. Its activity is regulated as follows. Allosterically activated by GTP, when glutamine is the substrate; GTP has no effect on the reaction when ammonia is the substrate. The allosteric effector GTP functions by stabilizing the protein conformation that binds the tetrahedral intermediate(s) formed during glutamine hydrolysis. Inhibited by the product CTP, via allosteric rather than competitive inhibition. Functionally, catalyzes the ATP-dependent amination of UTP to CTP with either L-glutamine or ammonia as the source of nitrogen. Regulates intracellular CTP levels through interactions with the four ribonucleotide triphosphates. This Burkholderia mallei (strain NCTC 10247) protein is CTP synthase.